The primary structure comprises 349 residues: Trans-enoyl reductase phmE (349 aa).

Residue 55–58 participates in NADP(+) binding; the sequence is CDWK. 143–150 lines the substrate pocket; it reads TGIGTMGL. NADP(+) contacts are provided by residues 182 to 185, tyrosine 200, and 247 to 248; these read SPKN and LE. 267–271 is a binding site for substrate; sequence GMAIL. 336–337 contributes to the NADP(+) binding site; sequence VS.

Belongs to the zinc-containing alcohol dehydrogenase family. In terms of assembly, monomer.

The protein operates within mycotoxin biosynthesis. Functionally, trans-enoyl reductase; part of the gene cluster that mediates the biosynthesis of the mycotoxins phomacins, leucine-derived cytochalasans with potent actin polymerization-inhibitory activities and monocot-specific antigerminative activities. The first step in the pathway is catalyzed by the hybrid PKS-NRPS phmA, assisted by the enoyl reductase phmE, that are responsible for fusion of the leucine precursor and the polyketide backbone to produce a 2-pyrrolidone intermediate. The polyketide synthase module (PKS) of phmA is responsible for the synthesis of the polyketide backbone and the downstream nonribosomal peptide synthetase (NRPS) amidates the carboxyl end of the polyketide with the leucine precursor. Because phmA lacks a designated enoylreductase (ER) domain, the required activity is provided the enoyl reductase phmE. Reduction by the hydrolyase phmG, followed by dehydration and intra-molecular Diels-Alder cyclization by the Diels-Alderase phmD then yield the required isoindolone-fused macrocycle. A number of oxidative steps catalyzed by the tailoring cytochrome P450 monooxygenase phmB, the FAD-linked oxidoreductase phmC and the short-chain dehydrogenase/reductase phmF, are further required to afford the final products, phomacin D and phomacin E. This chain is Trans-enoyl reductase phmE, found in Phaeosphaeria nodorum (strain SN15 / ATCC MYA-4574 / FGSC 10173) (Glume blotch fungus).